Consider the following 185-residue polypeptide: Ribosome-recycling factor (185 aa).

Belongs to the RRF family.

It is found in the cytoplasm. Responsible for the release of ribosomes from messenger RNA at the termination of protein biosynthesis. May increase the efficiency of translation by recycling ribosomes from one round of translation to another. The chain is Ribosome-recycling factor from Streptococcus pneumoniae (strain 70585).